The following is a 47-amino-acid chain: Large ribosomal subunit protein bL36A (47 aa).

Belongs to the bacterial ribosomal protein bL36 family.

The polypeptide is Large ribosomal subunit protein bL36A (Yersinia enterocolitica serotype O:8 / biotype 1B (strain NCTC 13174 / 8081)).